A 131-amino-acid polypeptide reads, in one-letter code: Small ribosomal subunit protein uS11 (131 aa).

The protein belongs to the universal ribosomal protein uS11 family. Part of the 30S ribosomal subunit. Interacts with proteins S7 and S18. Binds to IF-3.

In terms of biological role, located on the platform of the 30S subunit, it bridges several disparate RNA helices of the 16S rRNA. Forms part of the Shine-Dalgarno cleft in the 70S ribosome. This is Small ribosomal subunit protein uS11 from Helicobacter acinonychis (strain Sheeba).